Here is a 174-residue protein sequence, read N- to C-terminus: F-box protein At1g70360 (174 aa).

The F-box domain maps to 136 to 174 (PPCFISLPRELKHKILESLPGVDIGTLACVSSELRDMAS).

The sequence is that of F-box protein At1g70360 from Arabidopsis thaliana (Mouse-ear cress).